Here is an 811-residue protein sequence, read N- to C-terminus: Receptor-like protein 46 (811 aa).

An N-terminal signal peptide occupies residues 1–21 (MSKQCLLSCFLFFCFFIPQLS). At 22–782 (FSCPQDQRQS…EEEDKEEEET (761 aa)) the chain is on the extracellular side. N-linked (GlcNAc...) asparagine glycans are attached at residues asparagine 46, asparagine 71, asparagine 128, and asparagine 143. LRR repeat units follow at residues 104–128 (INSL…AFVN), 129–153 (LTSL…LFSL), 155–177 (NLQR…IKEL), 178–201 (KNLQ…IGSL), 203–225 (ELLT…VSRL), 226–249 (TKLK…IGNL), 251–273 (NLST…IHNL), 275–298 (NLET…WLFG), 299–322 (LQKL…GYVF), 324–348 (QFKL…LKNQ), 349–369 (TALV…PKWL), 370–395 (ADLK…LFQR), 397–419 (SLYY…IGES), 421–442 (VMVL…ITKI), 443–466 (PFLK…RPES), 468–488 (LEWL…YFGG), 490–510 (TSML…NFRN), 511–534 (LSYL…LISQ), 536–560 (SSSV…ISNL), 561–583 (TSLK…SLGN), 643–665 (LYTL…LGNL), 666–688 (KSLK…SFGD), 690–713 (EKVE…LSKL), and 714–738 (SELN…QLDR). N-linked (GlcNAc...) asparagine glycosylation occurs at asparagine 215. The N-linked (GlcNAc...) asparagine glycan is linked to asparagine 251. The N-linked (GlcNAc...) asparagine glycan is linked to asparagine 347. 3 N-linked (GlcNAc...) asparagine glycosylation sites follow: asparagine 376, asparagine 407, and asparagine 430. N-linked (GlcNAc...) asparagine glycans are attached at residues asparagine 499 and asparagine 510. N-linked (GlcNAc...) asparagine glycosylation is found at asparagine 546, asparagine 559, and asparagine 583. N-linked (GlcNAc...) asparagine glycans are attached at residues asparagine 672 and asparagine 701. The N-linked (GlcNAc...) asparagine glycan is linked to asparagine 747. A helical transmembrane segment spans residues 783–803 (IFSWNAAAIGCSCGFLIAVVF). The Cytoplasmic segment spans residues 804-811 (MSYNELWK).

It belongs to the RLP family.

It is found in the cell membrane. The sequence is that of Receptor-like protein 46 from Arabidopsis thaliana (Mouse-ear cress).